The following is a 422-amino-acid chain: Enolase (422 aa).

Glutamine 162 serves as a coordination point for (2R)-2-phosphoglycerate. Glutamate 204 functions as the Proton donor in the catalytic mechanism. Aspartate 241, glutamate 284, and aspartate 311 together coordinate Mg(2+). Positions 336, 365, 366, and 387 each coordinate (2R)-2-phosphoglycerate. Lysine 336 serves as the catalytic Proton acceptor.

Belongs to the enolase family. In terms of assembly, component of the RNA degradosome, a multiprotein complex involved in RNA processing and mRNA degradation. The cofactor is Mg(2+).

Its subcellular location is the cytoplasm. It localises to the secreted. It is found in the cell surface. The enzyme catalyses (2R)-2-phosphoglycerate = phosphoenolpyruvate + H2O. It functions in the pathway carbohydrate degradation; glycolysis; pyruvate from D-glyceraldehyde 3-phosphate: step 4/5. Catalyzes the reversible conversion of 2-phosphoglycerate (2-PG) into phosphoenolpyruvate (PEP). It is essential for the degradation of carbohydrates via glycolysis. The sequence is that of Enolase from Legionella pneumophila (strain Lens).